Consider the following 328-residue polypeptide: Porphobilinogen deaminase (328 aa).

Cysteine 245 is subject to S-(dipyrrolylmethanemethyl)cysteine.

Belongs to the HMBS family. In terms of assembly, monomer. Dipyrromethane is required as a cofactor.

The enzyme catalyses 4 porphobilinogen + H2O = hydroxymethylbilane + 4 NH4(+). It functions in the pathway porphyrin-containing compound metabolism; protoporphyrin-IX biosynthesis; coproporphyrinogen-III from 5-aminolevulinate: step 2/4. Its pathway is porphyrin-containing compound metabolism; chlorophyll biosynthesis. Tetrapolymerization of the monopyrrole PBG into the hydroxymethylbilane pre-uroporphyrinogen in several discrete steps. This is Porphobilinogen deaminase from Gloeobacter violaceus (strain ATCC 29082 / PCC 7421).